The sequence spans 230 residues: 5'-methylthioadenosine/S-adenosylhomocysteine nucleosidase (230 aa).

Glutamate 12 serves as the catalytic Proton acceptor. Residues glycine 78, isoleucine 153, and 174–175 each bind substrate; that span reads ME. Aspartate 198 serves as the catalytic Proton donor.

It belongs to the PNP/UDP phosphorylase family. MtnN subfamily.

The catalysed reaction is S-adenosyl-L-homocysteine + H2O = S-(5-deoxy-D-ribos-5-yl)-L-homocysteine + adenine. The enzyme catalyses S-methyl-5'-thioadenosine + H2O = 5-(methylsulfanyl)-D-ribose + adenine. It carries out the reaction 5'-deoxyadenosine + H2O = 5-deoxy-D-ribose + adenine. It participates in amino-acid biosynthesis; L-methionine biosynthesis via salvage pathway; S-methyl-5-thio-alpha-D-ribose 1-phosphate from S-methyl-5'-thioadenosine (hydrolase route): step 1/2. Functionally, catalyzes the irreversible cleavage of the glycosidic bond in both 5'-methylthioadenosine (MTA) and S-adenosylhomocysteine (SAH/AdoHcy) to adenine and the corresponding thioribose, 5'-methylthioribose and S-ribosylhomocysteine, respectively. Also cleaves 5'-deoxyadenosine, a toxic by-product of radical S-adenosylmethionine (SAM) enzymes, into 5-deoxyribose and adenine. The protein is 5'-methylthioadenosine/S-adenosylhomocysteine nucleosidase of Shewanella frigidimarina (strain NCIMB 400).